The primary structure comprises 293 residues: Foldase protein PrsA 2 (293 aa).

The N-terminal stretch at 1–20 (MKKKLILGLVMMMALFSLAA) is a signal peptide. Cysteine 21 carries N-palmitoyl cysteine lipidation. Cysteine 21 is lipidated: S-diacylglycerol cysteine. A PpiC domain is found at 135 to 226 (QPDITVSHIL…YGYHIIQMDK (92 aa)).

The protein belongs to the PrsA family.

The protein localises to the cell membrane. It catalyses the reaction [protein]-peptidylproline (omega=180) = [protein]-peptidylproline (omega=0). Functionally, plays a major role in protein secretion by helping the post-translocational extracellular folding of several secreted proteins. This Listeria monocytogenes serovar 1/2a (strain ATCC BAA-679 / EGD-e) protein is Foldase protein PrsA 2 (prsA2).